A 707-amino-acid polypeptide reads, in one-letter code: Anti-sigma-I factor RsgI9 (707 aa).

The Cytoplasmic segment spans residues 1–149; the sequence is MKITGVIVRI…NFSRISNIKN (149 aa). The 48-residue stretch at 3–50 folds into the RsgI N-terminal anti-sigma domain; sequence ITGVIVRIHKDRAIIRTDDNRLLAVKRHNDMMVGQIVSFDANEVHKVE. A helical membrane pass occupies residues 150–172; sequence FSRIASIAAAFVLIFLFGRNVML. Residues 173–707 are Extracellular-facing; the sequence is NNSSDSEYAY…DSEEKKEYIQ (535 aa). The stretch at 256–283 forms a coiled coil; that stretch reads NDKNKKTRDKREEKIDELKETIEQGIEA. The segment at 345–392 is disordered; sequence EDNTELAPTPTPVPPETPEPTPTPTASEATPSNSPVESKSPEAVPELG. Pro residues predominate over residues 353–367; sequence TPTPVPPETPEPTPT. A compositionally biased stretch (low complexity) spans 368-379; that stretch reads PTASEATPSNSP.

Its subcellular location is the cell membrane. The chain is Anti-sigma-I factor RsgI9 from Acetivibrio thermocellus (strain ATCC 27405 / DSM 1237 / JCM 9322 / NBRC 103400 / NCIMB 10682 / NRRL B-4536 / VPI 7372) (Clostridium thermocellum).